The primary structure comprises 145 residues: Protein AggB (145 aa).

The signal sequence occupies residues 1–24; that stretch reads MLKKSILPMSCGVLVMVMSGLLDA.

It to E.coli AfaD.

In Escherichia coli, this protein is Protein AggB (aggB).